Here is a 115-residue protein sequence, read N- to C-terminus: MRPLAALSQGIGLLMRGLIWLYRLFLSPLLGQNCRFDPSCSRYALEAITRHGPFWGLWLAVRRISRCHPWGGMGYDPVPDDPRPGRCGCKDAGPAVSAGSTEGNPGRRTDGTDPD.

The interval 81-115 (DPRPGRCGCKDAGPAVSAGSTEGNPGRRTDGTDPD) is disordered. The segment covering 105–115 (PGRRTDGTDPD) has biased composition (basic and acidic residues).

The protein belongs to the UPF0161 family.

The protein resides in the cell inner membrane. Functionally, could be involved in insertion of integral membrane proteins into the membrane. The chain is Putative membrane protein insertion efficiency factor from Rhodospirillum rubrum (strain ATCC 11170 / ATH 1.1.1 / DSM 467 / LMG 4362 / NCIMB 8255 / S1).